A 219-amino-acid polypeptide reads, in one-letter code: Transmembrane emp24 domain-containing protein 10 (219 aa).

The signal sequence occupies residues 1–31; the sequence is MSGLSGPPARRGPFPLALLLLFLLGPRLVLA. The required for interaction with STX17 stretch occupies residues 1–142; sequence MSGLSGPPAR…KNYEEIAKVE (142 aa). Topologically, residues 32 to 185 are lumenal; the sequence is ISFHLPINSR…RDTNESTNTR (154 aa). Residues 41-193 enclose the GOLD domain; it reads RKCLREEIHK…TRVLYFSIFS (153 aa). Positions 147–178 are required for TMED10 and TMED2 cis-Golgi network localization; that stretch reads LEVELRRLEDLSESIVNDFAYMKKREEEMRDT. Residues R171 and R176 each carry the dimethylated arginine modification. Residue N179 is glycosylated (N-linked (GlcNAc...) asparagine). Residues 186-206 form a helical membrane-spanning segment; it reads VLYFSIFSMFCLIGLATWQVF. The segment at 204–219 is interaction with COPG1; sequence QVFYLRRFFKAKKLIE. Residues 207 to 219 are Cytoplasmic-facing; that stretch reads YLRRFFKAKKLIE. The tract at residues 207–219 is interaction with ARF1 and IL1B; that stretch reads YLRRFFKAKKLIE. The COPII vesicle coat-binding signature appears at 211–212; the sequence is FF. Residues 211–219 carry the COPI vesicle coat-binding motif; that stretch reads FFKAKKLIE.

It belongs to the EMP24/GP25L family. Predominantly dimeric and to a lesser extent monomeric in the ER. Monomer and dimer in ERGIC and cis-Golgi network. Forms homooligomer (via GOLD domain); the assembly is promoted by direct binding with leaderless cargos and may form a protein channel that facilitates cargo entry into the ERGIC. Forms heterooligomeric complexes with other members of the p24 family such as TMED2, TMED7 and TMED9. Interacts (via GOLD domain) with TMED2 (via GOLD domain); the complex is required for export of TMED10 from the ER to the cis-Golgi network; the complex is proposed to be involved in cis-Golgi network dynamics and / or biogenesis. Associates with the COPI vesicle coat subunits (coatomer). Tetramerization of the cytoplasmic domain at the Golgi membrane in vitro; the complex is proposed to interact with COPI coatomer and induce budding of the vesicles. Interacts with COPG1; the interaction involves TMED10 homodimer. Interacts with ARF1 (GDP-bound); the interaction probably involves a TMED10 oligomer. Interacts with SEC23A, SEC24B, SEC24C and SEC24D components of the coat protein complex II/COPII, indicative of an association of TMED10 with the COPII vesicle coat. Interacts with CD59. Interacts with MPPE1/PGAP5; the complex might recruit and sort GPI-anchored proteins to the ER-exit site, or the interaction might lead to recycling of PGAP5 between the ER and the Golgi. Interacts with F2LR1/PAR2. Interacts with KDELR2/ERD2; the interaction is disrupted by KDELR2 ligand. Found in a complex composed at least of SURF4, TMED2 and TMED10. Associates with the presenilin-dependent gamma-secretase complex. Interacts with STX17; the interaction is direct. Interacts with IL-1; the interaction is direct. Interacts with RAB21 (active GTP-bound form); the interaction is indirect and regulates TMED10 abundance and localization at the Golgi.

It is found in the endoplasmic reticulum membrane. It localises to the endoplasmic reticulum-Golgi intermediate compartment membrane. The protein localises to the golgi apparatus membrane. Its subcellular location is the golgi apparatus. The protein resides in the cis-Golgi network membrane. It is found in the trans-Golgi network membrane. It localises to the cytoplasmic vesicle. The protein localises to the secretory vesicle membrane. Its subcellular location is the cell membrane. The protein resides in the melanosome. Cargo receptor involved in protein vesicular trafficking and quality control in the endoplasmic reticulum (ER) and Golgi. The p24 protein family is a group of transmembrane proteins that bind coat protein complex I/COPI and coat protein complex II/COPII involved in vesicular trafficking between the membranes. Acts at the lumenal side for incorporation of secretory cargo molecules into transport vesicles and involved in vesicle coat formation at the cytoplasmic side. Mainly functions in the early secretory pathway and cycles between the ER, ER-Golgi intermediate compartment (ERGIC) and Golgi, mediating cargo transport through COPI and COPII-coated vesicles. In COPII vesicle-mediated anterograde transport, involved in the transport of GPI-anchored proteins by acting together with TMED2 as their cargo receptor; the function specifically implies SEC24C and SEC24D of the COPII vesicle coat and lipid raft-like microdomains of the ER. Recognizes GPI anchors structural remodeled in the ER by the GPI inositol-deacylase/PGAP1 and the metallophosphoesterase MPPE1/PGAP5. In COPI vesicle-mediated retrograde transport, involved in the biogenesis of COPI vesicles and vesicle coat recruitment. Involved in trafficking of amyloid beta A4 protein and soluble APP-beta release (independent from the modulation of gamma-secretase activity). Involved in the KDELR2-mediated retrograde transport of the toxin A subunit (CTX-A-K63)together with COPI and the COOH terminus of KDELR2. On Golgi membranes, acts as a primary receptor for ARF1-GDP, a GTP-binding protein involved in COPI-vesicle formation. Increases coatomer-dependent GTPase-activating activity of ARFGAP2 which mediates the hydrolysis of ARF1-bound GTP and therefore modulates protein trafficking from the Golgi apparatus. Involved in the exocytic trafficking of G protein-coupled receptors F2LR1/PAR2 (trypsin and tryspin-like enzyme receptor), OPRM1 (opioid receptor) and P2RY4 (UTD and UDP receptor) from the Golgi to the plasma membrane, thus contributing to receptor resensitization. In addition to its cargo receptor activity, may also act as a protein channel after oligomerization, facilitating the post-translational entry of leaderless cytoplasmic cargo into the ERGIC. Involved in the translocation into ERGIC, the vesicle entry and the secretion of leaderless cargos (lacking the secretion signal sequence), including the mature form of interleukin 1/IL-1 family members, the alpha-crystallin B chain HSPB5, the carbohydrate-binding proteins galectin-1/LGALS1 and galectin-3/LGALS3, the microtubule-associated protein Tau/MAPT, and the annexin A1/ANXA1; the translocation process is dependent on cargo protein unfolding and enhanced by chaperones HSP90AB1 and HSP90B1/GRP9. Could also associates with the presenilin-dependent gamma-secretase complex in order to regulate gamma-cleavages of the amyloid beta A4 protein to yield amyloid-beta 40/Abeta40. This Homo sapiens (Human) protein is Transmembrane emp24 domain-containing protein 10.